A 94-amino-acid polypeptide reads, in one-letter code: Small ribosomal subunit protein bS6 (94 aa).

The protein belongs to the bacterial ribosomal protein bS6 family.

Its function is as follows. Binds together with bS18 to 16S ribosomal RNA. This chain is Small ribosomal subunit protein bS6, found in Phytoplasma mali (strain AT).